A 132-amino-acid chain; its full sequence is Small ribosomal subunit protein uS8 (132 aa).

It belongs to the universal ribosomal protein uS8 family. In terms of assembly, part of the 30S ribosomal subunit. Contacts proteins S5 and S12.

In terms of biological role, one of the primary rRNA binding proteins, it binds directly to 16S rRNA central domain where it helps coordinate assembly of the platform of the 30S subunit. This chain is Small ribosomal subunit protein uS8, found in Syntrophobacter fumaroxidans (strain DSM 10017 / MPOB).